The following is a 316-amino-acid chain: Protoheme IX farnesyltransferase (316 aa).

9 consecutive transmembrane segments (helical) span residues 32 to 52 (VMSL…GHIH), 53 to 73 (PVLG…SGAL), 93 to 113 (IPAG…LSGF), 116 to 136 (VILG…TIFF), 152 to 172 (NIVI…ACVT), 180 to 200 (TVLF…LALF), 221 to 241 (VTKH…ILPS), 252 to 271 (LVAA…VWRM), and 289 to 309 (IFYL…SIFV).

This sequence belongs to the UbiA prenyltransferase family. Protoheme IX farnesyltransferase subfamily.

The protein localises to the cell inner membrane. The enzyme catalyses heme b + (2E,6E)-farnesyl diphosphate + H2O = Fe(II)-heme o + diphosphate. Its pathway is porphyrin-containing compound metabolism; heme O biosynthesis; heme O from protoheme: step 1/1. Its function is as follows. Converts heme B (protoheme IX) to heme O by substitution of the vinyl group on carbon 2 of heme B porphyrin ring with a hydroxyethyl farnesyl side group. The chain is Protoheme IX farnesyltransferase from Rhizobium leguminosarum bv. trifolii (strain WSM2304).